We begin with the raw amino-acid sequence, 507 residues long: MGRKKIQITRIMDERNRQVTFTKRKFGLMKKAYELSVLCDCEIALIIFNSSNKLFQYASTDMDKVLLKYTEYNEPHESRTNSDIVEALNKKEHRGCDSPDPDTSYVLTPHTEEKYKKINEEFDNMMRNHKIAPGLPPQNFSMSVTVPVTSPNALSYTNPGSSLVSPSLAASSTLTDSSMLSPPQTTLHRNVSPGAPQRPPSTGNAGGMLSTTDLTVPNGAGSSPVGNGFVNSRASPNLIGATGANSLGKVMPTKSPPPPGGGNLGMNSRKPDLRVVIPPSSKGMMPPLSEEEELELNTQRISSSQATQPLATPVVSVTTPSLPPQGLVYSAMPTAYNTDYSLTSADLSALQGFNSPGMLSLGQVSAWQQHHLGQAALSSLVAGGQLSQGSNLSINTNQNISIKSEPISPPRDRMTPSGFQQQQQQQQQQQPPPPPQPQPQPPQPQPRQEMGRSPVDSLSSSSSSYDGSDREDPRGDFHSPIVLGRPPNTEDRESPSVKRMRMDAWVT.

The 55-residue stretch at 3–57 folds into the MADS-box domain; sequence RKKIQITRIMDERNRQVTFTKRKFGLMKKAYELSVLCDCEIALIIFNSSNKLFQY. Position 30 is a phosphoserine (Lys-30). The segment at residues 58–86 is a DNA-binding region (mef2-type); it reads ASTDMDKVLLKYTEYNEPHESRTNSDIVE. Position 59 is a phosphoserine; by CK2 (Ser-59). Ser-98 carries the phosphoserine modification. The segment covering 173 to 183 has biased composition (low complexity); the sequence is TLTDSSMLSPP. The segment at 173-229 is disordered; it reads TLTDSSMLSPPQTTLHRNVSPGAPQRPPSTGNAGGMLSTTDLTVPNGAGSSPVGNGF. Residues 209 to 229 show a composition bias toward polar residues; it reads LSTTDLTVPNGAGSSPVGNGF. A Phosphoserine modification is found at Ser-235. Positions 243 to 270 are disordered; that stretch reads GANSLGKVMPTKSPPPPGGGNLGMNSRK. Position 249 is an N6-acetyllysine (Lys-249). A Phosphoserine; by MAPK14 modification is found at Ser-255. Residues 266-283 form a required for interaction with MAPKs region; the sequence is MNSRKPDLRVVIPPSSKG. A beta domain region spans residues 289–296; that stretch reads SEEEELEL. Thr-312 and Thr-319 each carry phosphothreonine; by MAPK7 and MAPK14. The residue at position 312 (Thr-312) is a Phosphothreonine; by NLK. A Phosphoserine; by MAPK7 modification is found at Ser-355. The disordered stretch occupies residues 397-507; it reads NQNISIKSEP…KRMRMDAWVT (111 aa). At Lys-403 the chain carries N6-acetyllysine; alternate. A Glycyl lysine isopeptide (Lys-Gly) (interchain with G-Cter in SUMO); alternate cross-link involves residue Lys-403. Ser-408 carries the phosphoserine; by CDK5 modification. A Phosphothreonine modification is found at Thr-415. Positions 420–429 are enriched in low complexity; sequence QQQQQQQQQQ. The span at 430–445 shows a compositional bias: pro residues; the sequence is QPPPPPQPQPQPPQPQ. Ser-453 is subject to Phosphoserine; by MAPK. Positions 453–466 are enriched in low complexity; the sequence is SPVDSLSSSSSSYD. Composition is skewed to basic and acidic residues over residues 467–477 and 488–507; these read GSDREDPRGDF and NTED…AWVT.

Belongs to the MEF2 family. In terms of assembly, binds DNA as a homo- or heterodimer. Dimerizes with MEF2D. Interacts with HDAC7. Interacts with PIAS1; the interaction enhances sumoylation. Interacts with HDAC4, HDAC9 and SLC2A4RG. Interacts (via the N-terminal) with MAPK7; the interaction results in the phosphorylation and transcriptional activity of MEF2A. Constitutive phosphorylation on Ser-408 promotes Lys-403 sumoylation thus preventing acetylation at this site. Dephosphorylation on Ser-408 by PPP3CA upon neuron depolarization promotes a switch from sumoylation to acetylation on residue Lys-403 leading to inhibition of dendrite claw differentiation. Phosphorylation on Thr-312 and Thr-319 are the main sites involved in p38 MAPK signaling and activate transcription. Phosphorylated on these sites by MAPK14/p38alpha and MAPK11/p38beta, but not by MAPK13/p38delta nor by MAPK12/p38gamma. Phosphorylation on Ser-408 by CDK5 induced by neurotoxicity inhibits MEF2A transcriptional activation leading to apoptosis of cortical neurons. Phosphorylation on Thr-312, Thr-319 and Ser-355 can be induced by EGF. Post-translationally, sumoylation on Lys-403 is enhanced by PIAS1 and represses transcriptional activity. Phosphorylation on Ser-408 is required for sumoylation. Has no effect on nuclear location nor on DNA binding. Sumoylated with SUMO1 and, to a lesser extent with SUMO2 and SUMO3. PIASx facilitates sumoylation in postsynaptic dendrites in the cerebellar cortex and promotes their morphogenesis. In terms of processing, acetylation on Lys-403 activates transcriptional activity. Acetylated by p300 on several sites in diffentiating myocytes. Acetylation on Lys-4 increases DNA binding and transactivation. Hyperacetylation by p300 leads to enhanced cardiac myocyte growth and heart failure. Proteolytically cleaved in cerebellar granule neurons on several sites by caspase 3 and caspase 7 following neurotoxicity. Preferentially cleaves the CDK5-mediated hyperphosphorylated form which leads to neuron apoptosis and transcriptional inactivation. In terms of tissue distribution, isoform MEF2 and isoform MEFA are expressed only in skeletal and cardiac muscle and in the brain. Isoform RSRFC4 and isoform RSRFC9 are expressed in all tissues examined.

It localises to the nucleus. Transcriptional activator which binds specifically to the MEF2 element, 5'-YTA[AT](4)TAR-3', found in numerous muscle-specific genes. Also involved in the activation of numerous growth factor- and stress-induced genes. Mediates cellular functions not only in skeletal and cardiac muscle development, but also in neuronal differentiation and survival. Plays diverse roles in the control of cell growth, survival and apoptosis via p38 MAPK signaling in muscle-specific and/or growth factor-related transcription. In cerebellar granule neurons, phosphorylated and sumoylated MEF2A represses transcription of NUR77 promoting synaptic differentiation. Associates with chromatin to the ZNF16 promoter. The polypeptide is Myocyte-specific enhancer factor 2A (MEF2A) (Homo sapiens (Human)).